Here is a 240-residue protein sequence, read N- to C-terminus: Uridylate kinase (240 aa).

12–15 (KLSG) contacts ATP. The involved in allosteric activation by GTP stretch occupies residues 20 to 25 (GDKGFG). Glycine 54 lines the UMP pocket. The ATP site is built by glycine 55 and arginine 59. Residues aspartate 74 and 135-142 (TGSPYFST) each bind UMP. Asparagine 163, tyrosine 169, and aspartate 172 together coordinate ATP.

The protein belongs to the UMP kinase family. As to quaternary structure, homohexamer.

The protein localises to the cytoplasm. It carries out the reaction UMP + ATP = UDP + ADP. The protein operates within pyrimidine metabolism; CTP biosynthesis via de novo pathway; UDP from UMP (UMPK route): step 1/1. With respect to regulation, allosterically activated by GTP. Inhibited by UTP. Catalyzes the reversible phosphorylation of UMP to UDP. The sequence is that of Uridylate kinase from Levilactobacillus brevis (strain ATCC 367 / BCRC 12310 / CIP 105137 / JCM 1170 / LMG 11437 / NCIMB 947 / NCTC 947) (Lactobacillus brevis).